Here is a 273-residue protein sequence, read N- to C-terminus: Ribosomal RNA small subunit methyltransferase A (273 aa).

S-adenosyl-L-methionine contacts are provided by Asn18, Leu20, Gly45, Glu66, Asp91, and Asn113.

Belongs to the class I-like SAM-binding methyltransferase superfamily. rRNA adenine N(6)-methyltransferase family. RsmA subfamily.

It is found in the cytoplasm. The catalysed reaction is adenosine(1518)/adenosine(1519) in 16S rRNA + 4 S-adenosyl-L-methionine = N(6)-dimethyladenosine(1518)/N(6)-dimethyladenosine(1519) in 16S rRNA + 4 S-adenosyl-L-homocysteine + 4 H(+). Specifically dimethylates two adjacent adenosines (A1518 and A1519) in the loop of a conserved hairpin near the 3'-end of 16S rRNA in the 30S particle. May play a critical role in biogenesis of 30S subunits. This chain is Ribosomal RNA small subunit methyltransferase A, found in Escherichia coli O1:K1 / APEC.